The chain runs to 376 residues: Ribonucleoside-diphosphate reductase subunit beta (376 aa).

Fe cation-binding residues include Asp85, Glu116, and His119. Tyr123 is an active-site residue. Fe cation is bound by residues Glu205, Glu239, and His242.

It belongs to the ribonucleoside diphosphate reductase small chain family. Tetramer of two alpha and two beta subunits. Requires Fe cation as cofactor.

It catalyses the reaction a 2'-deoxyribonucleoside 5'-diphosphate + [thioredoxin]-disulfide + H2O = a ribonucleoside 5'-diphosphate + [thioredoxin]-dithiol. Its function is as follows. Provides the precursors necessary for DNA synthesis. Catalyzes the biosynthesis of deoxyribonucleotides from the corresponding ribonucleotides. This chain is Ribonucleoside-diphosphate reductase subunit beta (nrdB), found in Buchnera aphidicola subsp. Schizaphis graminum (strain Sg).